We begin with the raw amino-acid sequence, 358 residues long: Isopentenyl-diphosphate delta-isomerase (358 aa).

12-13 contacts substrate; sequence RK. FMN-binding positions include 69-71, S99, and N128; that span reads AMT. Q158 is a binding site for substrate. A Mg(2+)-binding site is contributed by E159. Residues K190, T220, 267 to 269, and 288 to 289 each bind FMN; these read GIR and AG.

Belongs to the IPP isomerase type 2 family. As to quaternary structure, homooctamer. Dimer of tetramers. It depends on FMN as a cofactor. The cofactor is NADPH. Requires Mg(2+) as cofactor.

Its subcellular location is the cytoplasm. The catalysed reaction is isopentenyl diphosphate = dimethylallyl diphosphate. Functionally, involved in the biosynthesis of isoprenoids. Catalyzes the 1,3-allylic rearrangement of the homoallylic substrate isopentenyl (IPP) to its allylic isomer, dimethylallyl diphosphate (DMAPP). The protein is Isopentenyl-diphosphate delta-isomerase of Listeria monocytogenes serotype 4b (strain CLIP80459).